The chain runs to 445 residues: Rab GDP dissociation inhibitor beta (445 aa).

Met-1 is modified (N-acetylmethionine). Lys-57 bears the N6-succinyllysine mark. An N6-acetyllysine modification is found at Lys-112. Ser-130 is modified (phosphoserine). At Lys-269 the chain carries N6-acetyllysine. Position 382 is a phosphoserine (Ser-382).

The protein belongs to the Rab GDI family. As to quaternary structure, interacts with RHOH. Interacts with the GDP-bound inactive forms of RAB3A, RAB3B, RAB3C, RAB5A, RAB5B, RAB5C, RAB8A, RAB8B, RAB10, RAB12, RAB35, and RAB43; binds RAB3D to a lesser extent. Interacts with DZIP1; this interaction negatively regulates the interaction of GDI2 with GDP-bound RAB8A. Ubiquitously expressed.

It is found in the cytoplasm. Its subcellular location is the membrane. The protein resides in the golgi apparatus. It localises to the trans-Golgi network. GDP-dissociation inhibitor preventing the GDP to GTP exchange of most Rab proteins. By keeping these small GTPases in their inactive GDP-bound form regulates intracellular membrane trafficking. Negatively regulates protein transport to the cilium and ciliogenesis through the inhibition of RAB8A. In Bos taurus (Bovine), this protein is Rab GDP dissociation inhibitor beta (GDI2).